A 518-amino-acid chain; its full sequence is Sensor protein kinase HptS (518 aa).

A run of 2 helical transmembrane segments spans residues 20 to 40 and 222 to 242; these read IFPVFLVIIIGLVSFYAIYIW and GITLLIVMAVVLVLLVIFGFI. The Histidine kinase domain occupies 297 to 513; that stretch reads EQLIHSIEHT…LICYKIPLSR (217 aa). At histidine 325 the chain carries Phosphohistidine; by autocatalysis.

Post-translationally, autophosphorylated.

The protein resides in the cell membrane. It carries out the reaction ATP + protein L-histidine = ADP + protein N-phospho-L-histidine.. Member of the two-component regulatory system HptS/HptR that regulates genes involved in hexose phosphate transport system in response to changes in extracellular phosphate sources. May act as a sensor protein kinase which is autophosphorylated at a histidine residue and transfers its phosphate group to the conserved aspartic acid residue in the regulatory domain of HptS. In turn, HptS antagonizes CcpA-dependent transcription of a subset of CcpA-regulated genes involved in antibiotic susceptibility. This Staphylococcus aureus (strain MSSA476) protein is Sensor protein kinase HptS (hptS).